Consider the following 492-residue polypeptide: Trehalose-phosphatase (492 aa).

Residues 1–55 (MTETVTDQGKQRSSKLQKNEAAKDEQVEGKGKETLESGTDKSAEQNSSLLVGQPD) form a disordered region. Positions 17-43 (QKNEAAKDEQVEGKGKETLESGTDKSA) are enriched in basic and acidic residues. 2 residues coordinate Mg(2+): Asp213 and Asp215. Residue Asp215 is the Proton donor/acceptor of the active site. 332 to 334 (QRK) is a binding site for substrate. A Mg(2+)-binding site is contributed by Asp424.

The protein belongs to the gob-1 trehalose phosphatase family. The cofactor is Mg(2+).

It catalyses the reaction alpha,alpha-trehalose 6-phosphate + H2O = alpha,alpha-trehalose + phosphate. Inhibited by trehalose 6-sulfate. Catalyzes the hydrolysis of trehalose 6-phosphate to trehalose and phosphate; prevents the accumulation of toxic levels of trehalose 6-phosphate. This is Trehalose-phosphatase from Brugia malayi (Filarial nematode worm).